Reading from the N-terminus, the 1021-residue chain is 2-oxoglutarate dehydrogenase complex component E1 (1021 aa).

A mitochondrion-targeting transit peptide spans Met-1 to Leu-40. Ca(2+) contacts are provided by His-142, Asp-155, and Asp-157. Residues Arg-311, Asp-410, Asn-443, and Ile-445 each contribute to the thiamine diphosphate site. Mg(2+) is bound by residues Asp-410, Asn-443, and Ile-445. Lys-533 participates in a covalent cross-link: Glycyl lysine isopeptide (Lys-Gly) (interchain with G-Cter in ubiquitin). Gln-675 provides a ligand contact to thiamine diphosphate.

The protein belongs to the alpha-ketoglutarate dehydrogenase family. As to quaternary structure, homodimer. The 2-oxoglutarate dehydrogenase complex is composed of OGDH (2-oxoglutarate dehydrogenase; E1), DLST (dihydrolipoamide succinyltransferase; E2) and DLD (dihydrolipoamide dehydrogenase; E3). It contains multiple copies of the three enzymatic components (E1, E2 and E3). In the nucleus, the 2-oxoglutarate dehydrogenase complex associates with kat2a. Thiamine diphosphate is required as a cofactor. Mg(2+) serves as cofactor. Expressed in the brain.

It is found in the mitochondrion. Its subcellular location is the nucleus. It carries out the reaction N(6)-[(R)-lipoyl]-L-lysyl-[protein] + 2-oxoglutarate + H(+) = N(6)-[(R)-S(8)-succinyldihydrolipoyl]-L-lysyl-[protein] + CO2. With respect to regulation, calcium ions and ADP stimulate, whereas ATP and NADH reduce catalytic activity. In terms of biological role, 2-oxoglutarate dehydrogenase (E1o) component of the 2-oxoglutarate dehydrogenase complex (OGDHC). Participates in the first step, rate limiting for the overall conversion of 2-oxoglutarate to succinyl-CoA and CO(2) catalyzed by the whole OGDHC. Catalyzes the irreversible decarboxylation of 2-oxoglutarate (alpha-ketoglutarate) via the thiamine diphosphate (ThDP) cofactor and subsequent transfer of the decarboxylated acyl intermediate on an oxidized dihydrolipoyl group that is covalently amidated to the E2 enzyme (dihydrolipoyllysine-residue succinyltransferase or DLST). Plays a key role in the Krebs (citric acid) cycle, which is a common pathway for oxidation of fuel molecules, including carbohydrates, fatty acids, and amino acids. Can catalyze the decarboxylation of 2-oxoadipate in vitro, but at a much lower rate than 2-oxoglutarate. Mainly active in the mitochondrion. A fraction of the 2-oxoglutarate dehydrogenase complex also localizes in the nucleus and is required for lysine succinylation of histones: associates with KAT2A on chromatin and provides succinyl-CoA to histone succinyltransferase KAT2A. The protein is 2-oxoglutarate dehydrogenase complex component E1 (ogdh) of Xenopus laevis (African clawed frog).